Consider the following 175-residue polypeptide: Ribulose bisphosphate carboxylase small subunit, chloroplastic 2 (175 aa).

Residues 1 to 46 constitute a chloroplast transit peptide; the sequence is MAPAVMASSATTVAPFQGLKSTAGLPISCRSGSTGLSSVSNGGRIR.

The protein belongs to the RuBisCO small chain family. Heterohexadecamer of 8 large and 8 small subunits.

It is found in the plastid. The protein resides in the chloroplast. Its function is as follows. RuBisCO catalyzes two reactions: the carboxylation of D-ribulose 1,5-bisphosphate, the primary event in carbon dioxide fixation, as well as the oxidative fragmentation of the pentose substrate. Both reactions occur simultaneously and in competition at the same active site. Although the small subunit is not catalytic it is essential for maximal activity. In Triticum aestivum (Wheat), this protein is Ribulose bisphosphate carboxylase small subunit, chloroplastic 2.